A 427-amino-acid polypeptide reads, in one-letter code: MSRSETLFASAQTHIPGGVNSPVRAFRSVGGTPLFLKHAEGAYVIDEDDKRYVDYVGSWGPMILGHSHPQVLDAVRRQLEHGLSYGAPTAMETEMAELVCRLVPSMEMVRMVSSGTEATMSAIRLARGYTGRDAIIKFEGCYHGHSDSLLVKAGSGALTQGVPSSAGVPADFAKHTLTLAYNDLDEVEATLKEKGEQVACIIVEPVAGNMNCVPPAPGFLEGLRRLCDAHGVVLIFDEVMTGFRVALGGAQAYYGVTPDLSTFGKIIGGGMPVGCFGGKRAIMERIAPLGPVYQAGTLSGNPLAMAAGLTTLELISRPGFHDELGAYTSRMLQGLQDRADAAGIPFVTTQVGGMFGLYFSGADDIVTFADVMASDADRFKRFFHLMLEGGVYLAPSAFEAGFTSIAHGDKELAITLDAAERAFAKLK.

K265 is subject to N6-(pyridoxal phosphate)lysine.

Belongs to the class-III pyridoxal-phosphate-dependent aminotransferase family. HemL subfamily. Homodimer. Requires pyridoxal 5'-phosphate as cofactor.

The protein resides in the cytoplasm. It catalyses the reaction (S)-4-amino-5-oxopentanoate = 5-aminolevulinate. Its pathway is porphyrin-containing compound metabolism; protoporphyrin-IX biosynthesis; 5-aminolevulinate from L-glutamyl-tRNA(Glu): step 2/2. This is Glutamate-1-semialdehyde 2,1-aminomutase from Stutzerimonas stutzeri (strain A1501) (Pseudomonas stutzeri).